The following is a 3583-amino-acid chain: Surfactin synthase subunit 2 (3583 aa).

3 Carrier domains span residues 965-1039 (APKT…EENE), 2005-2080 (APET…EASA), and 3034-3108 (APTT…ERAE). S999, S2040, and S3069 each carry O-(pantetheine 4'-phosphoryl)serine.

The protein belongs to the ATP-dependent AMP-binding enzyme family. It depends on pantetheine 4'-phosphate as a cofactor.

Its pathway is antibiotic biosynthesis; surfactin biosynthesis. This protein is a multifunctional enzyme able to activate and polymerize the amino acids Leu, Glu, Asp and Val. Activation sites for these AA consist of individual domains. This Bacillus subtilis (strain 168) protein is Surfactin synthase subunit 2 (srfAB).